Consider the following 198-residue polypeptide: MMVKLICAIVDIAGAAFPIDIDTNELVGDFKKVIKAENSRTIACDANDLRLFLAKTDGRWLTEFEVQNGVADISVFEELDVVGAPLNMIGLSEETVSSVAITKELVKAKKTPLHVLVVPSEPVQLQRKLWLVTGTVVNALGSKGIRRHLHLMASLHIGFYDPTRRVDNKNVAFWYEAKNLCFHVLFKSSTCFFYVSPF.

An N-terminal signal peptide occupies residues 1–15; sequence MMVKLICAIVDIAGA. Residues 16–55 form an LQLFLAK domain region; sequence AFPIDIDTNELVGDFKKVIKAENSRTIACDANDLRLFLAK. The segment at 56–113 is DWL domain; the sequence is TDGRWLTEFEVQNGVADISVFEELDVVGAPLNMIGLSEETVSSVAITKELVKAKKTPL. Residues 114-119 carry the HVLVXXP motif motif; the sequence is HVLVVP.

It belongs to the Crinkler effector family.

It localises to the secreted. It is found in the host cell. Its function is as follows. Secreted effector that elicits necrosis in host plants, a characteristic of plant innate immunity. The sequence is that of Crinkler effector protein BLC01 from Bremia lactucae (Lettuce downy mildew).